The primary structure comprises 114 residues: Flagellar hook-basal body complex protein FliE (114 aa).

Belongs to the FliE family.

Its subcellular location is the bacterial flagellum basal body. This chain is Flagellar hook-basal body complex protein FliE, found in Burkholderia lata (strain ATCC 17760 / DSM 23089 / LMG 22485 / NCIMB 9086 / R18194 / 383).